The primary structure comprises 186 residues: CASP-like protein 4C2 (186 aa).

Residues 1–31 (MRSPQPHRSGGDTQQHFQSTVSVQKLKRFNS) lie on the Cytoplasmic side of the membrane. A helical transmembrane segment spans residues 32 to 52 (LILVFRFAAFCFSLASAVFML). At 53–71 (TNSRGSDSLHWYNFDAFRY) the chain is on the extracellular side. A helical transmembrane segment spans residues 72–92 (VFAANAIVAIYSLFEMAASVW). The Cytoplasmic portion of the chain corresponds to 93–103 (EISRNATLFPE). Residues 104-124 (ICQVWFDFGHDQVFAYLLLSA) traverse the membrane as a helical segment. Over 125 to 150 (NTAGTELARTLKDTCTDNKAFCVQSD) the chain is Extracellular. The chain crosses the membrane as a helical span at residues 151–171 (IAIVLGFAGFLFLGISSLFSG). The Cytoplasmic portion of the chain corresponds to 172 to 186 (FRVVCFIINGSRFYV).

The protein belongs to the Casparian strip membrane proteins (CASP) family. Homodimer and heterodimers.

The protein resides in the cell membrane. The sequence is that of CASP-like protein 4C2 from Populus trichocarpa (Western balsam poplar).